Reading from the N-terminus, the 621-residue chain is Phytoene desaturase (621 aa).

Positions 1-23 are cleaved as a signal peptide; the sequence is MPSTSKRPTAIVIGSGVGGVSTA. The interval 394–425 is disordered; that stretch reads HASQAHQLSASRNGHISSASPPDQPGLTPTEK. The segment covering 397–414 has biased composition (polar residues); sequence QAHQLSASRNGHISSASP. A helical membrane pass occupies residues 598–618; it reads WEQWVSVLIYLLVGIFAWLWM.

It belongs to the carotenoid/retinoid oxidoreductase family. Requires NAD(+) as cofactor.

The protein resides in the membrane. It catalyses the reaction 15-cis-phytoene + 5 A = all-trans-3,4-didehydrolycopene + 5 AH2. It participates in carotenoid biosynthesis; lycopene biosynthesis. Phytoene desaturase involved in the carotenoid biosynthesis pathway. Converts phytoene into 3,4-didehydrolycopene via the intermediary of phytofluene, zeta-carotene, neurosporene and lycopene, by introducing up to five double bonds into phytoene. The chain is Phytoene desaturase (PDH1) from Cercospora nicotianae (Barn spot disease fungus).